Consider the following 256-residue polypeptide: ATP synthase peripheral stalk subunit b, mitochondrial (256 aa).

Residues 1-42 constitute a mitochondrion transit peptide; the sequence is MLSRVVLSAAAAAAPSLKNAALLGPGVLQATRIFHTGQPSLA. Lys131 carries the post-translational modification N6-succinyllysine. Residues Lys139, Lys154, Lys162, Lys221, Lys233, and Lys244 each carry the N6-acetyllysine modification.

The protein belongs to the eukaryotic ATPase B chain family. Component of the ATP synthase complex composed at least of ATP5F1A/subunit alpha, ATP5F1B/subunit beta, ATP5MC1/subunit c (homooctomer), MT-ATP6/subunit a, MT-ATP8/subunit 8, ATP5ME/subunit e, ATP5MF/subunit f, ATP5MG/subunit g, ATP5MK/subunit k, ATP5MJ/subunit j, ATP5F1C/subunit gamma, ATP5F1D/subunit delta, ATP5F1E/subunit epsilon, ATP5PF/subunit F6, ATP5PB/subunit b, ATP5PD/subunit d, ATP5PO/subunit OSCP. ATP synthase complex consists of a soluble F(1) head domain (subunits alpha(3) and beta(3)) - the catalytic core - and a membrane F(0) domain - the membrane proton channel (subunits c, a, 8, e, f, g, k and j). These two domains are linked by a central stalk (subunits gamma, delta, and epsilon) rotating inside the F1 region and a stationary peripheral stalk (subunits F6, b, d, and OSCP).

The protein resides in the mitochondrion. It localises to the mitochondrion inner membrane. Functionally, subunit b, of the mitochondrial membrane ATP synthase complex (F(1)F(0) ATP synthase or Complex V) that produces ATP from ADP in the presence of a proton gradient across the membrane which is generated by electron transport complexes of the respiratory chain. ATP synthase complex consist of a soluble F(1) head domain - the catalytic core - and a membrane F(1) domain - the membrane proton channel. These two domains are linked by a central stalk rotating inside the F(1) region and a stationary peripheral stalk. During catalysis, ATP synthesis in the catalytic domain of F(1) is coupled via a rotary mechanism of the central stalk subunits to proton translocation. In vivo, can only synthesize ATP although its ATP hydrolase activity can be activated artificially in vitro. Part of the complex F(0) domain. Part of the complex F(0) domain and the peripheric stalk, which acts as a stator to hold the catalytic alpha(3)beta(3) subcomplex and subunit a/ATP6 static relative to the rotary elements. This Bos taurus (Bovine) protein is ATP synthase peripheral stalk subunit b, mitochondrial.